A 266-amino-acid chain; its full sequence is MLKYCAEIWDEVRNRRPLVHCITNYVTVNDVANIILAAGASPAMVEYPAEASGFAPLASVLYFNLGTLTGEQEAAMLEGRWAAASRDVPLILDPVACGVIGRKVDLIERIKSLGKIQVLKGNIAEIKSLAGLAGKAQGVDSLDTGEGLEEACLQLAVKDKLIAVATGEVDIVAEENRYARIFNGTPLFQNITGAGCMAGGVIAACVGAAPEEAWLASITGLLAFNLAGERAASQAGNRPGTFRTLLFDELFVLRGEELMKEGRLEW.

Substrate is bound at residue M44. ATP-binding residues include K120 and T166. G193 is a substrate binding site.

This sequence belongs to the Thz kinase family. Requires Mg(2+) as cofactor.

The catalysed reaction is 5-(2-hydroxyethyl)-4-methylthiazole + ATP = 4-methyl-5-(2-phosphooxyethyl)-thiazole + ADP + H(+). Its pathway is cofactor biosynthesis; thiamine diphosphate biosynthesis; 4-methyl-5-(2-phosphoethyl)-thiazole from 5-(2-hydroxyethyl)-4-methylthiazole: step 1/1. Functionally, catalyzes the phosphorylation of the hydroxyl group of 4-methyl-5-beta-hydroxyethylthiazole (THZ). The sequence is that of Hydroxyethylthiazole kinase from Syntrophomonas wolfei subsp. wolfei (strain DSM 2245B / Goettingen).